Consider the following 117-residue polypeptide: MQTIAQQITNIIEESLTDMGFELVLVKFKGVSPKVVEVLIDSLNGNKISIEDCTNVSRTISAILDVEDLIEEAYSLEVSSSGIERTLVKFENYNRFLGREVKIKLKELLNGKTLYPR.

The protein belongs to the RimP family.

It is found in the cytoplasm. Its function is as follows. Required for maturation of 30S ribosomal subunits. This chain is Ribosome maturation factor RimP, found in Rickettsia prowazekii (strain Madrid E).